A 118-amino-acid chain; its full sequence is UPF0344 protein BLi01172/BL01343 (118 aa).

Helical transmembrane passes span 6-26 (ITSWVIALILVFVAYGLYSSG), 33-53 (ITHMILRLFYIIVIITGAQLF), 62-82 (EYIAKALLGLITIGFMEMLLI), and 89-109 (AATGIWIGFIVVLLLTVVLGL).

This sequence belongs to the UPF0344 family.

Its subcellular location is the cell membrane. This is UPF0344 protein BLi01172/BL01343 from Bacillus licheniformis (strain ATCC 14580 / DSM 13 / JCM 2505 / CCUG 7422 / NBRC 12200 / NCIMB 9375 / NCTC 10341 / NRRL NRS-1264 / Gibson 46).